We begin with the raw amino-acid sequence, 448 residues long: Nicotinate phosphoribosyltransferase pncB1 (448 aa).

The tract at residues 1–21 is disordered; it reads MGPPPAARRREGEPDNQDPAG. His212 carries the post-translational modification Phosphohistidine. Positions 353–372 are disordered; that stretch reads RSSYKESPGGRKEALRRSRA.

Belongs to the NAPRTase family. Transiently phosphorylated on a His residue during the reaction cycle. Phosphorylation strongly increases the affinity for substrates and increases the rate of nicotinate D-ribonucleotide production. Dephosphorylation regenerates the low-affinity form of the enzyme, leading to product release.

It catalyses the reaction nicotinate + 5-phospho-alpha-D-ribose 1-diphosphate + ATP + H2O = nicotinate beta-D-ribonucleotide + ADP + phosphate + diphosphate. It functions in the pathway cofactor biosynthesis; NAD(+) biosynthesis; nicotinate D-ribonucleotide from nicotinate: step 1/1. In terms of biological role, involved in the Preiss-Handler pathway, which is a recycling route that permits the salvage of free nicotinamide (NM) and nicotinic acid (Na) involved in the NAD biosynthesis. Catalyzes the synthesis of beta-nicotinate D-ribonucleotide from nicotinate and 5-phospho-D-ribose 1-phosphate at the expense of ATP. It is not able to use nicotinamide. PncB1 contributes to basal NAD level. The chain is Nicotinate phosphoribosyltransferase pncB1 (pncB1) from Mycobacterium tuberculosis (strain CDC 1551 / Oshkosh).